The chain runs to 347 residues: GMP reductase (347 aa).

Residue 108–131 (ADFEKTVQILALNPALNFVCIDVA) coordinates NADP(+). K(+) contacts are provided by glycine 181 and glycine 183. The active-site Thioimidate intermediate is cysteine 186. An NADP(+)-binding site is contributed by 216-239 (IVSDGGCTMPGDVAKAFGGGADFV).

It belongs to the IMPDH/GMPR family. GuaC type 1 subfamily. As to quaternary structure, homotetramer.

It catalyses the reaction IMP + NH4(+) + NADP(+) = GMP + NADPH + 2 H(+). Catalyzes the irreversible NADPH-dependent deamination of GMP to IMP. It functions in the conversion of nucleobase, nucleoside and nucleotide derivatives of G to A nucleotides, and in maintaining the intracellular balance of A and G nucleotides. This is GMP reductase from Salmonella paratyphi C (strain RKS4594).